The chain runs to 613 residues: Proline--tRNA ligase (613 aa).

This sequence belongs to the class-II aminoacyl-tRNA synthetase family. ProS type 1 subfamily. As to quaternary structure, homodimer.

It is found in the cytoplasm. It catalyses the reaction tRNA(Pro) + L-proline + ATP = L-prolyl-tRNA(Pro) + AMP + diphosphate. In terms of biological role, catalyzes the attachment of proline to tRNA(Pro) in a two-step reaction: proline is first activated by ATP to form Pro-AMP and then transferred to the acceptor end of tRNA(Pro). As ProRS can inadvertently accommodate and process non-cognate amino acids such as alanine and cysteine, to avoid such errors it has two additional distinct editing activities against alanine. One activity is designated as 'pretransfer' editing and involves the tRNA(Pro)-independent hydrolysis of activated Ala-AMP. The other activity is designated 'posttransfer' editing and involves deacylation of mischarged Ala-tRNA(Pro). The misacylated Cys-tRNA(Pro) is not edited by ProRS. The protein is Proline--tRNA ligase of Cyanothece sp. (strain PCC 7425 / ATCC 29141).